Here is a 96-residue protein sequence, read N- to C-terminus: Integration host factor subunit beta (96 aa).

It belongs to the bacterial histone-like protein family. As to quaternary structure, heterodimer of an alpha and a beta chain.

Its function is as follows. This protein is one of the two subunits of integration host factor, a specific DNA-binding protein that functions in genetic recombination as well as in transcriptional and translational control. The polypeptide is Integration host factor subunit beta (Methylocella silvestris (strain DSM 15510 / CIP 108128 / LMG 27833 / NCIMB 13906 / BL2)).